The primary structure comprises 484 residues: Rho guanine nucleotide exchange factor 35 (484 aa).

Positions 139–418 are disordered; sequence FSSDLGSEEE…ALIAPEDSPH (280 aa). Serine 184 is subject to Phosphoserine. The span at 217–237 shows a compositional bias: low complexity; the sequence is ESQGLLHPQEVQVLEEQGQQE. Basic and acidic residues predominate over residues 266-278; that stretch reads NDEKGEQKQKQEQ. A compositionally biased stretch (acidic residues) spans 299–309; it reads GLNDGEWEQED. Basic and acidic residues-rich tracts occupy residues 323 to 368 and 394 to 404; these read GEER…KEKG and RSREEENEHHG.

This chain is Rho guanine nucleotide exchange factor 35 (ARHGEF35), found in Homo sapiens (Human).